A 486-amino-acid chain; its full sequence is MRHLLFLCPCVIGVAFHLWLFNFSGLFSWFLVWSPHSYDIVVGVLSARHNHELRNVIRHTWLQHLNHHSSLSQRVLVKFIIGSHGCDIPVEDREDPYSCKLLNITNPTLKQEIESFSIPDSAAVITEHHVVNVNFRVLYPVVITRLGVFQHDSAAGFQRNITVKLFQTEHEEALFSARFSPASSGVQVNGIWYKPVEQFILPEGFEGTVVWESHDPEGLLSGNVHHVIVNDGGGIFRLTTVKEGLLPYEFTEGVEGIAGGFTYTIHEGETLLNTLETRPERIQNHLAALEKEDALLQEESTTFQDIVFVNVVDTYRNVPSKLLNFYRWTVQLTRFEFLLKTDDDCFIDIDNVLKMVAQKELQKENAWWGNFRLNWAVDRTGKWQELEYLSPAYPAFACGSGYIISNDIVQWLAVNSQRLKTYQGEDVSMGIWMSAIGPSRYQDSRWLCEKKCEAGMLSSPQYTPQELMEIWQQKERCGNPCACEDR.

Residues 1–10 (MRHLLFLCPC) are Cytoplasmic-facing. A helical; Signal-anchor for type II membrane protein membrane pass occupies residues 11 to 31 (VIGVAFHLWLFNFSGLFSWFL). Over 32–486 (VWSPHSYDIV…CGNPCACEDR (455 aa)) the chain is Lumenal. N-linked (GlcNAc...) asparagine glycans are attached at residues asparagine 103 and asparagine 160.

Belongs to the glycosyltransferase 31 family.

The protein localises to the golgi apparatus membrane. It localises to the endoplasmic reticulum. The catalysed reaction is 3-O-(N-acetyl-beta-D-glucosaminyl-(1-&gt;4)-alpha-D-mannosyl)-L-threonyl-[protein] + UDP-N-acetyl-alpha-D-galactosamine = 3-O-[beta-D-GalNAc-(1-&gt;3)-beta-D-GlcNAc-(1-&gt;4)-alpha-D-Man]-L-Thr-[protein] + UDP + H(+). It participates in protein modification; protein glycosylation. In terms of biological role, beta-1,3-N-acetylgalactosaminyltransferase that synthesizes a unique carbohydrate structure, GalNAc-beta-1-3GlcNAc, on N- and O-glycans. Has no galactose nor galactosaminyl transferase activity toward any acceptor substrate. Involved in alpha-dystroglycan (dag1) glycosylation. This is UDP-GalNAc:beta-1,3-N-acetylgalactosaminyltransferase 2 (b3galnt2) from Xenopus laevis (African clawed frog).